The chain runs to 491 residues: Cobyric acid synthase (491 aa).

Residues 250–439 (EVTIAVIRLP…LHGIFDNGAW (190 aa)) enclose the GATase cobBQ-type domain. Cys331 serves as the catalytic Nucleophile. His431 is a catalytic residue.

Belongs to the CobB/CobQ family. CobQ subfamily.

The protein operates within cofactor biosynthesis; adenosylcobalamin biosynthesis. In terms of biological role, catalyzes amidations at positions B, D, E, and G on adenosylcobyrinic A,C-diamide. NH(2) groups are provided by glutamine, and one molecule of ATP is hydrogenolyzed for each amidation. In Synechococcus sp. (strain ATCC 27144 / PCC 6301 / SAUG 1402/1) (Anacystis nidulans), this protein is Cobyric acid synthase.